A 102-amino-acid polypeptide reads, in one-letter code: Large ribosomal subunit protein uL24 (102 aa).

The protein belongs to the universal ribosomal protein uL24 family. In terms of assembly, part of the 50S ribosomal subunit.

In terms of biological role, one of two assembly initiator proteins, it binds directly to the 5'-end of the 23S rRNA, where it nucleates assembly of the 50S subunit. One of the proteins that surrounds the polypeptide exit tunnel on the outside of the subunit. The chain is Large ribosomal subunit protein uL24 from Macrococcus caseolyticus (strain JCSC5402) (Macrococcoides caseolyticum).